The chain runs to 768 residues: MTISPPEKEQKKEPVLDKPIETDAIPVDFSKLDKPGFWSKSLAKGPKTTTWIWNLHADAHDFDTHVGDLQETSRKVFSAHFGHLAVIFIWMSAAFFHGARFSNYSGWLSDPTHVKPGAQVVWPIVGQEMLNADLGGNYHGIQITSGIFQMWRGWGITNETELMALAIGALLMAAIMLHGGIYHYHKAAPKLDWFRNLESMLNHHIAGLVGLGSIAWAGHCIHIGAPTAALMDAIDAGKPLIIDGIPIASIADMPLPHELCNPAIASQIFPGLAGRTVENFFTTNWWAFSDFLTFKGGLNPVTGSLWMTDISHHHLAFGVLAVLGGHLYRTMFGIGHSLKEILDNHAGDPILFPAPNGHKGIYEFLANSWHAQLGLNLAMIGSLSIIISHHMYAMPPYPYLSIDYPTVLGLFTHHMWIGGLFIVGAAAHAGIAMIRDYDPAVHIDNVLDRILKARDALISHLNWACMFLGFHSFGLYIHNDVMRALGRPADMFSDTGIQLQPVFAQWIQNIHNSAAGSTTLAGANVNLQPGLVSEVFNGSVSQVGGKIGIAPIPLGTADFMIHHIHAFTIHVTLLILLKGVLFARSSRLIPDKANLGFRFPCDGPGRGGTCQVSSWDHVFLGLFWMYNGLSVVIFHFSWKMQSDVWGLTGGNFAQSSITINGWLRDFLWAQSSQVLTSYGQPISMYGLMFLGAHFVWAFSLMFLFSGRGYWQELFESIIWAHNKLNLAPTIQPRALSITQGRAVGAAHFLLGGIATTWAFFHARLIGLG.

8 helical membrane-spanning segments follow: residues 76-99, 162-185, 201-225, 310-328, 369-392, 408-434, 456-478, and 559-577; these read VFSAHFGHLAVIFIWMSAAFFHGA, LMALAIGALLMAAIMLHGGIYHYH, LNHHIAGLVGLGSIAWAGHCIHIGA, ISHHHLAFGVLAVLGGHLY, WHAQLGLNLAMIGSLSIIISHHMY, LGLFTHHMWIGGLFIVGAAAHAGIAMI, ALISHLNWACMFLGFHSFGLYIH, and FMIHHIHAFTIHVTLLILL. Positions 601 and 610 each coordinate [4Fe-4S] cluster. 2 helical membrane passes run 617–638 and 682–704; these read HVFLGLFWMYNGLSVVIFHFSW and ISMYGLMFLGAHFVWAFSLMFLF. His693 contributes to the divinylchlorophyll a' binding site. Residues Met701 and Tyr709 each coordinate divinyl chlorophyll a. Trp710 serves as a coordination point for phylloquinone. The helical transmembrane segment at 742–762 threads the bilayer; it reads AVGAAHFLLGGIATTWAFFHA.

Belongs to the PsaA/PsaB family. In terms of assembly, the PsaA/B heterodimer binds the P700 divinyl chlorophyll special pair and subsequent electron acceptors. PSI consists of a core antenna complex that captures photons, and an electron transfer chain that converts photonic excitation into a charge separation. The cyanobacterial PSI reaction center is composed of one copy each of PsaA,B,C,D,E,F,I,J,K,L,M and X, and forms trimeric complexes. PSI electron transfer chain: 5 divinyl chlorophyll a, 1 divinyl chlorophyll a', 2 phylloquinones and 3 4Fe-4S clusters. PSI core antenna: 90 divinyl chlorophyll a, 22 carotenoids, 3 phospholipids and 1 galactolipid. P700 is a divinyl chlorophyll a/divinyl chlorophyll a' dimer, A0 is one or more divinyl chlorophyll a, A1 is one or both phylloquinones and FX is a shared 4Fe-4S iron-sulfur center. is required as a cofactor.

The protein localises to the cellular thylakoid membrane. The enzyme catalyses reduced [plastocyanin] + hnu + oxidized [2Fe-2S]-[ferredoxin] = oxidized [plastocyanin] + reduced [2Fe-2S]-[ferredoxin]. Its function is as follows. PsaA and PsaB bind P700, the primary electron donor of photosystem I (PSI), as well as the electron acceptors A0, A1 and FX. PSI is a plastocyanin/cytochrome c6-ferredoxin oxidoreductase, converting photonic excitation into a charge separation, which transfers an electron from the donor P700 chlorophyll pair to the spectroscopically characterized acceptors A0, A1, FX, FA and FB in turn. Oxidized P700 is reduced on the lumenal side of the thylakoid membrane by plastocyanin or cytochrome c6. The polypeptide is Photosystem I P700 chlorophyll a apoprotein A1 (Prochlorococcus marinus (strain NATL1A)).